Reading from the N-terminus, the 342-residue chain is DNA primase small subunit PriS (342 aa).

Active-site residues include aspartate 97, aspartate 99, and aspartate 276.

This sequence belongs to the eukaryotic-type primase small subunit family. In terms of assembly, heterodimer of a small subunit (PriS) and a large subunit (PriL). Requires Mg(2+) as cofactor. The cofactor is Mn(2+).

Catalytic subunit of DNA primase, an RNA polymerase that catalyzes the synthesis of short RNA molecules used as primers for DNA polymerase during DNA replication. The small subunit contains the primase catalytic core and has DNA synthesis activity on its own. Binding to the large subunit stabilizes and modulates the activity, increasing the rate of DNA synthesis while decreasing the length of the DNA fragments, and conferring RNA synthesis capability. The DNA polymerase activity may enable DNA primase to also catalyze primer extension after primer synthesis. May also play a role in DNA repair. This Thermococcus sibiricus (strain DSM 12597 / MM 739) protein is DNA primase small subunit PriS.